A 211-amino-acid polypeptide reads, in one-letter code: Histidine biosynthesis bifunctional protein HisIE (211 aa).

Residues 1–118 are phosphoribosyl-AMP cyclohydrolase; sequence MNVDDLTFDD…IYGASDRFGI (118 aa). Residues 119–211 form a phosphoribosyl-ATP pyrophosphohydrolase region; the sequence is IATLEALIAE…LEERHRPKEE (93 aa).

It in the N-terminal section; belongs to the PRA-CH family. In the C-terminal section; belongs to the PRA-PH family.

The protein localises to the cytoplasm. It catalyses the reaction 1-(5-phospho-beta-D-ribosyl)-ATP + H2O = 1-(5-phospho-beta-D-ribosyl)-5'-AMP + diphosphate + H(+). The enzyme catalyses 1-(5-phospho-beta-D-ribosyl)-5'-AMP + H2O = 1-(5-phospho-beta-D-ribosyl)-5-[(5-phospho-beta-D-ribosylamino)methylideneamino]imidazole-4-carboxamide. The protein operates within amino-acid biosynthesis; L-histidine biosynthesis; L-histidine from 5-phospho-alpha-D-ribose 1-diphosphate: step 2/9. It participates in amino-acid biosynthesis; L-histidine biosynthesis; L-histidine from 5-phospho-alpha-D-ribose 1-diphosphate: step 3/9. The protein is Histidine biosynthesis bifunctional protein HisIE (hisI) of Halalkalibacterium halodurans (strain ATCC BAA-125 / DSM 18197 / FERM 7344 / JCM 9153 / C-125) (Bacillus halodurans).